The primary structure comprises 256 residues: uncharacterized protein (256 aa).

A disordered region spans residues 1 to 23; sequence MIPPCENAPHIIYHESQRGTRDR. Over residues 12-23 the composition is skewed to basic and acidic residues; it reads IYHESQRGTRDR.

This is an uncharacterized protein from Homo sapiens (Human).